The chain runs to 1367 residues: Paired amphipathic helix protein Sin3-like 2 (1367 aa).

Residues 14-44 (QFKRPLGSSRGESYEQSPITGGGSIGEGGIN) form a disordered region. Positions 33 to 42 (TGGGSIGEGG) are enriched in gly residues. PAH domains follow at residues 46–116 (QKLT…LPKG) and 130–200 (KTVE…LPDS). The disordered stretch occupies residues 212–322 (SQAQRYDDRG…EAYSGPASHS (111 aa)). Composition is skewed to basic and acidic residues over residues 230-286 (MFME…SRDL) and 299-311 (FSEK…RMEG). The 70-residue stretch at 327 to 396 (LKSMYNQAFL…DEFNQFFERC (70 aa)) folds into the PAH 3 domain. Disordered regions lie at residues 417 to 446 (EENL…KERS), 786 to 883 (DVHA…LSKP), 912 to 946 (QSDT…DSED), and 958 to 1031 (ATAK…EGME). Basic and acidic residues-rich tracts occupy residues 424–446 (VKGE…KERS) and 806–819 (SSGK…DLAN). Composition is skewed to polar residues over residues 851-876 (ATSS…SSGS) and 912-923 (QSDTSKANSNYD). A compositionally biased stretch (basic and acidic residues) spans 958–967 (ATAKTEHSVE). Composition is skewed to acidic residues over residues 968–989 (AEGE…EAGE) and 997–1016 (IGDE…EHDE). Ser1023 bears the Phosphoserine mark.

It is found in the nucleus. Functionally, acts as a transcriptional repressor. Plays roles in regulating gene expression and genome stability. This is Paired amphipathic helix protein Sin3-like 2 (SNL2) from Arabidopsis thaliana (Mouse-ear cress).